A 488-amino-acid polypeptide reads, in one-letter code: Glutamyl-tRNA(Gln) amidotransferase subunit A (488 aa).

Catalysis depends on charge relay system residues Lys-77 and Ser-152. Ser-176 functions as the Acyl-ester intermediate in the catalytic mechanism.

It belongs to the amidase family. GatA subfamily. In terms of assembly, heterotrimer of A, B and C subunits.

It catalyses the reaction L-glutamyl-tRNA(Gln) + L-glutamine + ATP + H2O = L-glutaminyl-tRNA(Gln) + L-glutamate + ADP + phosphate + H(+). In terms of biological role, allows the formation of correctly charged Gln-tRNA(Gln) through the transamidation of misacylated Glu-tRNA(Gln) in organisms which lack glutaminyl-tRNA synthetase. The reaction takes place in the presence of glutamine and ATP through an activated gamma-phospho-Glu-tRNA(Gln). In Streptococcus equi subsp. zooepidemicus (strain H70), this protein is Glutamyl-tRNA(Gln) amidotransferase subunit A.